We begin with the raw amino-acid sequence, 419 residues long: UDP-N-acetylmuramoylalanine--D-glutamate ligase (419 aa).

An ATP-binding site is contributed by 109 to 115 (GSTGKTT).

The protein belongs to the MurCDEF family.

Its subcellular location is the cytoplasm. The catalysed reaction is UDP-N-acetyl-alpha-D-muramoyl-L-alanine + D-glutamate + ATP = UDP-N-acetyl-alpha-D-muramoyl-L-alanyl-D-glutamate + ADP + phosphate + H(+). The protein operates within cell wall biogenesis; peptidoglycan biosynthesis. Functionally, cell wall formation. Catalyzes the addition of glutamate to the nucleotide precursor UDP-N-acetylmuramoyl-L-alanine (UMA). In Chlamydia felis (strain Fe/C-56) (Chlamydophila felis), this protein is UDP-N-acetylmuramoylalanine--D-glutamate ligase.